The chain runs to 2278 residues: Protein Ycf2 (2278 aa).

1632–1639 serves as a coordination point for ATP; the sequence is GSIGTGRS.

This sequence belongs to the Ycf2 family.

Its subcellular location is the plastid. The protein localises to the chloroplast stroma. Functionally, probable ATPase of unknown function. Its presence in a non-photosynthetic plant (Epifagus virginiana) and experiments in tobacco indicate that it has an essential function which is probably not related to photosynthesis. The chain is Protein Ycf2 from Solanum bulbocastanum (Wild potato).